Consider the following 414-residue polypeptide: MLVIEDVRAYEVLDSRGNPTVKAEVTLSDGSVGAAIVPSGASTGSKEALELRDNDERFGGKGVLKAVANVNETIADEILGLDAFNQTQLDDTLRELDGTNNYSNLGANATLGVSMATARAAAAALGMPLYRYLGGANASILPVPMCNIINGGAHANNNVDFQEFMIMPFGFTSFKEALRSVCEIYAILKKELANSGHSTALGDEGGFAPNLANNTEPIDLLMTCIKKAGYENRVKIALDVASTEFFKDGKYHMEGKAFSSEALIERYVELCAKYPICSIEDGLAENDFEGWIKLTEKLGNKIQLVGDDLFVTNEDILREGIIKKMANAVLIKPNQIGTITQTMRTVRLAQRNNYKCVMSHRSGESEDAFIADFAVALNTGQIKTGALARGERTAKYNRLLEIEFESDEYLGEKL.

Q162 contacts (2R)-2-phosphoglycerate. The Proton donor role is filled by E204. Mg(2+) contacts are provided by D239, E280, and D307. (2R)-2-phosphoglycerate is bound by residues K332, R361, S362, and K383. K332 functions as the Proton acceptor in the catalytic mechanism.

It belongs to the enolase family. Mg(2+) serves as cofactor.

It is found in the cytoplasm. Its subcellular location is the secreted. The protein localises to the cell surface. The catalysed reaction is (2R)-2-phosphoglycerate = phosphoenolpyruvate + H2O. The protein operates within carbohydrate degradation; glycolysis; pyruvate from D-glyceraldehyde 3-phosphate: step 4/5. Catalyzes the reversible conversion of 2-phosphoglycerate (2-PG) into phosphoenolpyruvate (PEP). It is essential for the degradation of carbohydrates via glycolysis. The polypeptide is Enolase (Campylobacter jejuni subsp. jejuni serotype O:2 (strain ATCC 700819 / NCTC 11168)).